We begin with the raw amino-acid sequence, 185 residues long: MAETAYTPRLRTEYDRKIKSALTEKFGYANVMQVPRLDKVVLNMGIGEAVNDRKKAETAAADLSLIAGQKAVVTYSRVAIATFKLRENQPIGCKVTLRKAKMYEFIDRLINVALPRVRDFRGLNPKSFDGRGNYSLGIKEHIIFPEIDFDKAGESWGMDITVCTTATTDDEARALLTAFNFPFRQ.

This sequence belongs to the universal ribosomal protein uL5 family. Part of the 50S ribosomal subunit; part of the 5S rRNA/L5/L18/L25 subcomplex. Contacts the 5S rRNA and the P site tRNA. Forms a bridge to the 30S subunit in the 70S ribosome.

This is one of the proteins that bind and probably mediate the attachment of the 5S RNA into the large ribosomal subunit, where it forms part of the central protuberance. In the 70S ribosome it contacts protein S13 of the 30S subunit (bridge B1b), connecting the 2 subunits; this bridge is implicated in subunit movement. Contacts the P site tRNA; the 5S rRNA and some of its associated proteins might help stabilize positioning of ribosome-bound tRNAs. In Bradyrhizobium sp. (strain ORS 278), this protein is Large ribosomal subunit protein uL5.